The primary structure comprises 406 residues: 11-beta-hydroxysteroid dehydrogenase type 2 (406 aa).

82 to 111 (TRAVLITGCDSGFGKETAKKLDAMGFTVLA) provides a ligand contact to NAD(+). Ser-219 is a binding site for substrate. Catalysis depends on Tyr-232, which acts as the Proton acceptor. The disordered stretch occupies residues 379-406 (GQPGATPAPDTAQDNPNPNPDPSLVGAR).

The protein belongs to the short-chain dehydrogenases/reductases (SDR) family. As to quaternary structure, interacts with ligand-free cytoplasmic NR3C2. In terms of tissue distribution, highly expressed in the kidney.

It is found in the microsome. It localises to the endoplasmic reticulum. The enzyme catalyses an 11beta-hydroxysteroid + NAD(+) = an 11-oxosteroid + NADH + H(+). It carries out the reaction corticosterone + NAD(+) = 11-dehydrocorticosterone + NADH + H(+). It catalyses the reaction cortisol + NAD(+) = cortisone + NADH + H(+). The catalysed reaction is 11beta,17beta-dihydroxyandrost-4-ene-3-one + NAD(+) = 17beta-hydroxyandrost-4-ene-3,11-dione + NADH + H(+). The enzyme catalyses 11beta-hydroxyandrost-4-ene-3,17-dione + NAD(+) = androst-4-ene-3,11,17-trione + NADH + H(+). The protein operates within steroid metabolism. With respect to regulation, inhibited by carbenoloxone. Its function is as follows. Catalyzes the conversion of biologically active 11beta-hydroxyglucocorticoids (11beta-hydroxysteroid) such as corticosterone, to inactive 11-ketoglucocorticoids (11-oxosteroid) such as 11-dehydrocorticosterone, in the presence of NAD(+). Functions as a dehydrogenase (oxidase), thereby decreasing the concentration of active glucocorticoids, thus protecting the nonselective mineralocorticoid receptor from occupation by glucocorticoids. Plays an important role in maintaining glucocorticoids balance during preimplantation and protects the fetus from excessive maternal corticosterone exposure. Catalyzes the oxidation of 11beta-hydroxytestosterone (11beta,17beta-dihydroxyandrost-4-ene-3-one) to 11-ketotestosterone (17beta-hydroxyandrost-4-ene-3,11-dione), a major bioactive androgen. Catalyzes the conversion of 11beta-hydroxyandrostenedione (11beta-hydroxyandrost-4-ene-3,17-dione) to 11-ketoandrostenedione (androst-4-ene-3,11,17-trione), which can be further metabolized to 11-ketotestosterone. Converts 7-beta-25-dihydroxycholesterol to 7-oxo-25-hydroxycholesterol in vitro. 7-beta-25-dihydroxycholesterol (not 7-oxo-25-hydroxycholesterol) acts as a ligand for the G-protein-coupled receptor (GPCR) Epstein-Barr virus-induced gene 2 (EBI2) and may thereby regulate immune cell migration. May protect ovulating oocytes and fertilizing spermatozoa from the adverse effects of cortisol. This chain is 11-beta-hydroxysteroid dehydrogenase type 2 (HSD11B2), found in Oryctolagus cuniculus (Rabbit).